We begin with the raw amino-acid sequence, 106 residues long: ATP-dependent Clp protease adapter protein ClpS (106 aa).

A disordered region spans residues methionine 1–leucine 22. Residues lysine 9 to glutamine 20 are compositionally biased toward basic and acidic residues.

It belongs to the ClpS family. In terms of assembly, binds to the N-terminal domain of the chaperone ClpA.

In terms of biological role, involved in the modulation of the specificity of the ClpAP-mediated ATP-dependent protein degradation. The chain is ATP-dependent Clp protease adapter protein ClpS from Photorhabdus laumondii subsp. laumondii (strain DSM 15139 / CIP 105565 / TT01) (Photorhabdus luminescens subsp. laumondii).